Reading from the N-terminus, the 257-residue chain is Global transcriptional regulator CodY (257 aa).

The GAF domain stretch occupies residues 1–155 (MSLLSKTREL…AATVIGMEIL (155 aa)). The H-T-H motif DNA-binding region spans 203-222 (ASKVADRVGITRSVIVNALR).

Belongs to the CodY family.

It localises to the cytoplasm. Functionally, DNA-binding global transcriptional regulator which is involved in the adaptive response to starvation and acts by directly or indirectly controlling the expression of numerous genes in response to nutrient availability. During rapid exponential growth, CodY is highly active and represses genes whose products allow adaptation to nutrient depletion. This chain is Global transcriptional regulator CodY, found in Staphylococcus epidermidis (strain ATCC 12228 / FDA PCI 1200).